The following is a 693-amino-acid chain: Sister chromatid cohesion 1 protein 3 (693 aa).

Disordered stretches follow at residues 167 to 250 (IPMD…PGTV), 262 to 361 (DLSP…KNFD), 460 to 511 (PVSP…TFDN), and 545 to 573 (TQSGNWETESYRTEPSTSTVPEDLPGQRN). 2 stretches are compositionally biased toward basic and acidic residues: residues 178–201 (VSRHTGEIDVETAHETGPDNEPRD) and 232–243 (TEERIPNSERND). Polar residues predominate over residues 264 to 277 (SPTSHPSFAAQQQD). Over residues 278-295 (VRVERTESLDETLNEKEP) the composition is skewed to basic and acidic residues. A compositionally biased stretch (low complexity) spans 316–325 (RSGSPGSAAG). 2 stretches are compositionally biased toward polar residues: residues 465 to 483 (PDSTNPDSTVQLSPAQQTE) and 545 to 564 (TQSGNWETESYRTEPSTSTV).

It belongs to the rad21 family. In terms of assembly, component of the cohesin complex. Low expression in shoots, buds, siliques, leaves and roots. Found in, but not limited to, actively dividing cells: in procambium, protoderm and ground meristem in roots, and in shoot and floral meristems.

It is found in the nucleus. Functionally, may be involved in sister chromatid cohesion during mitosis. The chain is Sister chromatid cohesion 1 protein 3 (SYN3) from Arabidopsis thaliana (Mouse-ear cress).